The chain runs to 105 residues: MGCCPGDCFTCCTQEQNCCEECCCQPGCCGCCGSCCGCGGSGCGGSGCGGSCCGSSCCGSGCGGCGGCGGCGGGCCGSSCCGSSCCGSGCCGPVCCQPTPICDTK.

In terms of assembly, interacts with hair keratins.

In terms of biological role, in the hair cortex, hair keratin intermediate filaments are embedded in an interfilamentous matrix, consisting of hair keratin-associated proteins (KRTAP), which are essential for the formation of a rigid and resistant hair shaft through their extensive disulfide bond cross-linking with abundant cysteine residues of hair keratins. The matrix proteins include the high-sulfur and high-glycine-tyrosine keratins. This chain is Keratin-associated protein 17-1 (KRTAP17-1), found in Homo sapiens (Human).